Here is a 347-residue protein sequence, read N- to C-terminus: NADH-ubiquinone oxidoreductase chain 2 (347 aa).

Transmembrane regions (helical) follow at residues 1–21 (MNPL…AIVM), 25–45 (HWLT…PMLM), 59–79 (YFLT…MNLT), 96–116 (IIMT…FWVP), 127–147 (CLIL…MISP), 149–169 (INLN…GWGG), 178–198 (IMAY…AYNP), 200–220 (MTML…MLLI), 247–267 (IMLS…WMII), 276–296 (IIMP…YMRL), and 325–345 (LLSP…MMSL).

Belongs to the complex I subunit 2 family. As to quaternary structure, core subunit of respiratory chain NADH dehydrogenase (Complex I) which is composed of 45 different subunits. Interacts with TMEM242.

Its subcellular location is the mitochondrion inner membrane. It catalyses the reaction a ubiquinone + NADH + 5 H(+)(in) = a ubiquinol + NAD(+) + 4 H(+)(out). Its function is as follows. Core subunit of the mitochondrial membrane respiratory chain NADH dehydrogenase (Complex I) which catalyzes electron transfer from NADH through the respiratory chain, using ubiquinone as an electron acceptor. Essential for the catalytic activity and assembly of complex I. The chain is NADH-ubiquinone oxidoreductase chain 2 from Natalus stramineus (Mexican funnel-eared bat).